The chain runs to 712 residues: Probable GTP diphosphokinase RSH3, chloroplastic (712 aa).

The transit peptide at 1-64 (MVVATTIALY…LLFSGASVKS (64 aa)) directs the protein to the chloroplast. Residues 65–74 (SSSSSSSHPS) are compositionally biased toward low complexity. Residues 65 to 84 (SSSSSSSHPSVGEELASIRH) form a disordered region. Residues 237–338 (YLQHCVETAM…IKLADRLHNM (102 aa)) enclose the HD domain.

This sequence belongs to the RelA/SpoT family.

It localises to the plastid. It is found in the chloroplast. The enzyme catalyses GTP + ATP = guanosine 3'-diphosphate 5'-triphosphate + AMP. In terms of biological role, probable ppGpp (guanosine 3'-diphosphate 5'-diphosphate) synthetase that may be involved in a rapid plant ppGpp-mediated response to pathogens and other stresses. The sequence is that of Probable GTP diphosphokinase RSH3, chloroplastic (RSH3) from Arabidopsis thaliana (Mouse-ear cress).